The sequence spans 115 residues: Large ribosomal subunit protein bL19 (115 aa).

It belongs to the bacterial ribosomal protein bL19 family.

This protein is located at the 30S-50S ribosomal subunit interface and may play a role in the structure and function of the aminoacyl-tRNA binding site. This chain is Large ribosomal subunit protein bL19, found in Clostridium tetani (strain Massachusetts / E88).